The sequence spans 199 residues: Imidazole glycerol phosphate synthase subunit HisH 2 (199 aa).

Residues 1-199 (MIAVIDVSGN…NNFLSLESTC (199 aa)) enclose the Glutamine amidotransferase type-1 domain. Catalysis depends on cysteine 76, which acts as the Nucleophile. Catalysis depends on residues histidine 177 and glutamate 179.

Heterodimer of HisH and HisF.

The protein resides in the cytoplasm. The enzyme catalyses 5-[(5-phospho-1-deoxy-D-ribulos-1-ylimino)methylamino]-1-(5-phospho-beta-D-ribosyl)imidazole-4-carboxamide + L-glutamine = D-erythro-1-(imidazol-4-yl)glycerol 3-phosphate + 5-amino-1-(5-phospho-beta-D-ribosyl)imidazole-4-carboxamide + L-glutamate + H(+). The catalysed reaction is L-glutamine + H2O = L-glutamate + NH4(+). The protein operates within amino-acid biosynthesis; L-histidine biosynthesis; L-histidine from 5-phospho-alpha-D-ribose 1-diphosphate: step 5/9. Its function is as follows. IGPS catalyzes the conversion of PRFAR and glutamine to IGP, AICAR and glutamate. The HisH subunit provides the glutamine amidotransferase activity that produces the ammonia necessary to HisF for the synthesis of IGP and AICAR. The protein is Imidazole glycerol phosphate synthase subunit HisH 2 of Legionella pneumophila (strain Paris).